A 987-amino-acid chain; its full sequence is ATP-dependent 6-phosphofructokinase subunit alpha (987 aa).

Residues 1-580 form an N-terminal catalytic PFK domain 1 region; sequence MQSQDSCYGV…LYENFLSTTV (580 aa). Ser-3 bears the Phosphoserine mark. Residue Lys-89 forms a Glycyl lysine isopeptide (Lys-Gly) (interchain with G-Cter in ubiquitin) linkage. Phosphoserine is present on residues Ser-166, Ser-179, Ser-185, Ser-189, and Ser-192. Residue Gly-215 coordinates ATP. The residue at position 217 (Ser-217) is a Phosphoserine. Residues 278 to 279 and 308 to 311 each bind ATP; these read RS and GDGS. Asp-309 contacts Mg(2+). Beta-D-fructose 6-phosphate-binding positions include 354 to 356, Arg-391, and 398 to 400; these read SID and MGR. Asp-356 functions as the Proton acceptor in the catalytic mechanism. A Phosphothreonine modification is found at Thr-450. Beta-D-fructose 6-phosphate is bound by residues Glu-455, Lys-482, and 488-491; that span reads HVQR. The tract at residues 581-594 is interdomain linker; the sequence is KDDGSELLPVSDRL. Residues 595–987 form a C-terminal regulatory PFK domain 2 region; sequence NIGIVHVGAP…EVAALAAENK (393 aa). Residue Lys-625 forms a Glycyl lysine isopeptide (Lys-Gly) (interchain with G-Cter in ubiquitin) linkage. Residues Arg-665, 722 to 726, Arg-760, 767 to 769, Glu-827, Arg-853, 859 to 862, and Arg-952 contribute to the beta-D-fructose 2,6-bisphosphate site; these read TVSNN, QGG, and HVQQ.

This sequence belongs to the phosphofructokinase type A (PFKA) family. ATP-dependent PFK group I subfamily. Eukaryotic two domain clade 'E' sub-subfamily. As to quaternary structure, heterooctamer of 4 alpha and 4 beta chains. Mg(2+) serves as cofactor.

It is found in the cytoplasm. The protein resides in the mitochondrion outer membrane. It catalyses the reaction beta-D-fructose 6-phosphate + ATP = beta-D-fructose 1,6-bisphosphate + ADP + H(+). It participates in carbohydrate degradation; glycolysis; D-glyceraldehyde 3-phosphate and glycerone phosphate from D-glucose: step 3/4. Its activity is regulated as follows. Allosterically activated by ADP, AMP, or fructose 2,6-bisphosphate, and allosterically inhibited by ATP or citrate. Its function is as follows. Catalyzes the phosphorylation of D-fructose 6-phosphate to fructose 1,6-bisphosphate by ATP, the first committing step of glycolysis. The chain is ATP-dependent 6-phosphofructokinase subunit alpha (PFK1) from Saccharomyces cerevisiae (strain ATCC 204508 / S288c) (Baker's yeast).